The sequence spans 224 residues: Small ribosomal subunit protein uS3 (224 aa).

Residues 39 to 107 (IREFLKKKPS…DVWVEIAEVK (69 aa)) form the KH type-2 domain.

Belongs to the universal ribosomal protein uS3 family. In terms of assembly, part of the 30S ribosomal subunit. Forms a tight complex with proteins S10 and S14.

Binds the lower part of the 30S subunit head. Binds mRNA in the 70S ribosome, positioning it for translation. The sequence is that of Small ribosomal subunit protein uS3 from Chlamydia trachomatis serovar A (strain ATCC VR-571B / DSM 19440 / HAR-13).